The following is a 350-amino-acid chain: Paired box protein Pax-4 (350 aa).

The paired DNA-binding region spans 5-131 (GISSMNQLGG…SSINRVLRAL (127 aa)). Residues 8–64 (SMNQLGGLFVNGRPLPLDTRQQIVRLAVSGMRPCDISRILKVSNGCVSKILGRYYRT) form a PAI subdomain region. The interval 83-131 (PVVARIAQLKGECPALFAWEIQRQLCAEGLCTQDKTPSVSSINRVLRAL) is RED subdomain. The interval 153–172 (LTPHSGSETPRGTHPGTGHR) is disordered. Residues 170–229 (GHRNRTIFSPSQAEALEKEFQRGQYPDSVARGKLATATSLPEDTVRVWFSNRRAKWRRQE) constitute a DNA-binding region (homeobox). Positions 278–350 (CYQLCWATAP…ATPTHFSHWP (73 aa)) are transcription repression.

Belongs to the paired homeobox family.

It localises to the nucleus. In terms of biological role, plays an important role in the differentiation and development of pancreatic islet beta cells. Transcriptional repressor that binds to a common element in the glucagon, insulin and somatostatin promoters. Competes with PAX6 for this same promoter binding site. Isoform 2 appears to be a dominant negative form antagonizing PAX4 transcriptional activity. In Homo sapiens (Human), this protein is Paired box protein Pax-4 (PAX4).